The chain runs to 107 residues: Putative double-stranded DNA mimic protein YpsIP31758_1954 (107 aa).

The protein belongs to the putative dsDNA mimic protein family.

May act as a double-stranded DNA (dsDNA) mimic. Probably regulates the activity of a dsDNA-binding protein. The protein is Putative double-stranded DNA mimic protein YpsIP31758_1954 of Yersinia pseudotuberculosis serotype O:1b (strain IP 31758).